Here is a 292-residue protein sequence, read N- to C-terminus: Putative FNIP repeat-containing protein L281 (292 aa).

The stretch at 95-134 (FNKSIDDIPSTITHLSLGAAFNGEVSNIPTSVTHLKLGVS) is one FNIP repeat.

This is Putative FNIP repeat-containing protein L281 from Acanthamoeba polyphaga mimivirus (APMV).